We begin with the raw amino-acid sequence, 382 residues long: Nitric oxide reductase FlRd-NAD(+) reductase (382 aa).

This sequence belongs to the FAD-dependent oxidoreductase family. FAD serves as cofactor.

Its subcellular location is the cytoplasm. It catalyses the reaction 2 reduced [nitric oxide reductase rubredoxin domain] + NAD(+) + H(+) = 2 oxidized [nitric oxide reductase rubredoxin domain] + NADH. The protein operates within nitrogen metabolism; nitric oxide reduction. Functionally, one of at least two accessory proteins for anaerobic nitric oxide (NO) reductase. Reduces the rubredoxin moiety of NO reductase. The protein is Nitric oxide reductase FlRd-NAD(+) reductase of Vibrio vulnificus (strain YJ016).